The sequence spans 534 residues: Blue-light-activated protein (534 aa).

The 74-residue stretch at 20–93 (GKDIFFAAVE…QSIRDAIAQR (74 aa)) folds into the PAS domain. Cys70 carries the post-translational modification S-4a-FMN cysteine. A PAC domain is found at 94-148 (NDISAEIINYRKDGSSFWNALFISPVYNDAGDLIYFFASQLDISRRKDAEEALRQ). Residues 161 to 390 (GIAHDFNNLL…TLRLYFPVDE (230 aa)) form the Histidine kinase domain. Residue His164 is modified to Phosphohistidine; by autocatalysis. The Response regulatory domain occupies 411-527 (RILIVEDRPD…DLARKVRQVL (117 aa)). At Asp461 the chain carries 4-aspartylphosphate.

Post-translationally, FMN binds covalently to cysteine after exposure to blue light and this bond is spontaneously broken in the dark.

It catalyses the reaction ATP + protein L-histidine = ADP + protein N-phospho-L-histidine.. Its function is as follows. Photosensitive kinase and response regulator that is involved in increased bacterial virulence upon exposure to light. This Pseudomonas syringae pv. tomato (strain ATCC BAA-871 / DC3000) protein is Blue-light-activated protein.